We begin with the raw amino-acid sequence, 264 residues long: Small ribosomal subunit protein uS2 (264 aa).

Positions isoleucine 243–aspartate 253 are enriched in acidic residues. Residues isoleucine 243–serine 264 are disordered. Residues alanine 255–serine 264 show a composition bias toward polar residues.

The protein belongs to the universal ribosomal protein uS2 family.

The chain is Small ribosomal subunit protein uS2 from Deinococcus geothermalis (strain DSM 11300 / CIP 105573 / AG-3a).